Reading from the N-terminus, the 417-residue chain is Serine--tRNA ligase (417 aa).

Residue 226-228 (TSE) participates in L-serine binding. ATP is bound by residues 257 to 259 (RRE) and Val273. Glu280 serves as a coordination point for L-serine. Residue 344 to 347 (ELTS) participates in ATP binding. Thr379 is an L-serine binding site.

This sequence belongs to the class-II aminoacyl-tRNA synthetase family. Type-1 seryl-tRNA synthetase subfamily. Homodimer. The tRNA molecule binds across the dimer.

It localises to the cytoplasm. It catalyses the reaction tRNA(Ser) + L-serine + ATP = L-seryl-tRNA(Ser) + AMP + diphosphate + H(+). The catalysed reaction is tRNA(Sec) + L-serine + ATP = L-seryl-tRNA(Sec) + AMP + diphosphate + H(+). It functions in the pathway aminoacyl-tRNA biosynthesis; selenocysteinyl-tRNA(Sec) biosynthesis; L-seryl-tRNA(Sec) from L-serine and tRNA(Sec): step 1/1. Catalyzes the attachment of serine to tRNA(Ser). Is also able to aminoacylate tRNA(Sec) with serine, to form the misacylated tRNA L-seryl-tRNA(Sec), which will be further converted into selenocysteinyl-tRNA(Sec). This is Serine--tRNA ligase from Mycobacterium sp. (strain KMS).